The sequence spans 663 residues: Polyunsaturated fatty acid lipoxygenase ALOX15 (663 aa).

The PLAT domain maps to 2–115 (GVYRIRVSTG…ILSLPEGTGC (114 aa)). The Lipoxygenase domain occupies 116-663 (TVVEDSQGLF…PSMVENSVAI (548 aa)). Serine 149 carries the post-translational modification Phosphoserine. Fe cation-binding residues include histidine 361, histidine 366, histidine 541, histidine 545, and isoleucine 663.

Belongs to the lipoxygenase family. Interacts with PEBP1; in response to IL13/interleukin-13, prevents the interaction of PEBP1 with RAF1 to activate the ERK signaling cascade. Fe cation serves as cofactor. In terms of tissue distribution, detected in leukocytes, lung and aorta.

The protein localises to the cytoplasm. The protein resides in the cytosol. It is found in the cell membrane. Its subcellular location is the lipid droplet. It catalyses the reaction (5Z,8Z,11Z,14Z)-eicosatetraenoate + O2 = (12S)-hydroperoxy-(5Z,8Z,10E,14Z)-eicosatetraenoate. It carries out the reaction (5Z,8Z,11Z,14Z)-eicosatetraenoate + O2 = (15S)-hydroperoxy-(5Z,8Z,11Z,13E)-eicosatetraenoate. The catalysed reaction is (9Z,12Z)-octadecadienoate + O2 = (13S)-hydroperoxy-(9Z,11E)-octadecadienoate. The enzyme catalyses (12S)-hydroperoxy-(5Z,8Z,10E,14Z)-eicosatetraenoate = (8S)-hydroxy-(11S,12S)-epoxy-(5Z,9E,14Z)-eicosatrienoate. It catalyses the reaction (5Z,8Z,11Z,14Z)-eicosatetraenoate + 2 O2 = (14R,15S)-dihydroperoxy-(5Z,8Z,10E,12E)-eicosatetraenoate. It carries out the reaction (5Z,8Z,11Z,14Z)-eicosatetraenoate + 2 O2 = (8S,15S)-dihydroperoxy-(5Z,9E,11Z,13E)-eicosatetraenoate. The catalysed reaction is (14S,15R)-epoxy-(5Z,8Z,11Z)-eicosatrienoate + O2 = (8S)-hydroperoxy-(14S,15R)-epoxy-(5Z,9E,11Z)-eicosatrienoate. The enzyme catalyses (14S,15R)-epoxy-(5Z,8Z,11Z)-eicosatrienoate + O2 = (12S)-hydroperoxy-(14S,15R)-epoxy-(5Z,8Z,10E)-eicosatrienoate. It catalyses the reaction (14R,15S)-epoxy-(5Z,8Z,11Z)-eicosatrienoate + O2 = (5S)-hydroperoxy-(14R,15S)-epoxy-(6E,8Z,11Z)-eicosatrienoate. It carries out the reaction (14R,15S)-epoxy-(5Z,8Z,11Z)-eicosatrienoate + O2 = (12S)-hydroperoxy-(14R,15S)-epoxy-(5Z,8Z,10E)-eicosatrienoate. The catalysed reaction is (15R)-hydroperoxy-(5Z,8Z,11Z,13E)-eicosatetraenoate = 15-oxo-(5Z,8Z,11Z,13E)-eicosatetraenoate + H2O. The enzyme catalyses (15S)-hydroperoxy-(5Z,8Z,11Z,13E)-eicosatetraenoate = (14S,15S)-epoxy-(5Z,8Z,10E,12E)-eicosatetraenoate + H2O. It catalyses the reaction (4Z,7Z,10Z,13Z,16Z)-docosapentaenoate + O2 = 14-hydroperoxy-(4Z,7Z,10Z,12E,16Z)-docosapentaenoate. It carries out the reaction (7Z,10Z,13Z,16Z,19Z)-docosapentaenoate + O2 = 14-hydroperoxy-(7Z,10Z,12E,16Z,19Z)-docosapentaenoate. The catalysed reaction is (4Z,7Z,10Z,13Z,16Z,19Z)-docosahexaenoate + O2 = (14S)-hydroperoxy-(4Z,7Z,10Z,12E,16Z,19Z)-docosahexaenoate. The enzyme catalyses (4Z,7Z,10Z,13Z,16Z,19Z)-docosahexaenoate + O2 = (17S)-hydroperoxy-(4Z,7Z,10Z,13Z,15E,19Z)-docosahexaenoate. It catalyses the reaction (7S)-hydroperoxy-(4Z,8E,10Z,13Z,16Z,19Z)-docosahexaenoate + O2 = (7S,14S)-dihydroperoxy-(4Z,8E,10Z,12E,16Z,19Z)-docosahexaenoate. It carries out the reaction (7S)-hydroperoxy-(4Z,8E,10Z,13Z,16Z,19Z)-docosahexaenoate + O2 = (7S,17S)-dihydroperoxy-(4Z,8E,10Z,13Z,15E,19Z)-docosahexaenoate. The catalysed reaction is (4Z,7Z,10Z,13Z,16Z,19Z)-docosahexaenoate + O2 = (11S)-hydroperoxy-(4Z,7Z,9E,13Z,16Z,19Z)-docosahexaenoate. The enzyme catalyses N-(5Z,8Z,11Z,14Z)-eicosatetraenoyl-taurine + O2 = N-(12S)-hydroperoxy-(5Z,8Z,10E,14Z)-eicosatetraenoyl-taurine. It catalyses the reaction N-(5Z,8Z,11Z,14Z)-eicosatetraenoyl-gamma-aminobutanoate + O2 = N-(12S)-hydroperoxy-(5Z,8Z,10E,14Z)-eicosatetraenoyl-gamma-aminobutanoate. It carries out the reaction N-(5Z,8Z,11Z,14Z)-eicosatetraenoyl-glycine + O2 = N-(12S)-hydroperoxy-(5Z,8Z,10E,14Z)-eicosatetraenoyl-glycine. The catalysed reaction is N-(5Z,8Z,11Z,14Z)-eicosatetraenoyl-L-alanine + O2 = N-(12S)-hydroperoxy-(5Z,8Z,10E,14Z)-eicosatetraenoyl-alanine. The enzyme catalyses N-(5Z,8Z,11Z,14Z)-eicosatetraenoyl-taurine + O2 = N-(15S)-hydroperoxy-(5Z,8Z,11Z,13E)-eicosatetraenoyl-taurine. It catalyses the reaction N-(5Z,8Z,11Z,14Z)-eicosatetraenoyl-gamma-aminobutanoate + O2 = N-(15S)-hydroperoxy-(5Z,8Z,11Z,13E)-eicosatetraenoyl-gamma-aminobutanoate. It carries out the reaction N-(5Z,8Z,11Z,14Z)-eicosatetraenoyl-glycine + O2 = N-(15S)-hydroperoxy-(5Z,8Z,11Z,13E)-eicosatetraenoyl-glycine. The catalysed reaction is N-(5Z,8Z,11Z,14Z)-eicosatetraenoyl-L-alanine + O2 = N-(15S)-hydroperoxy-(5Z,8Z,11Z,13E)-eicosatetraenoyl-alanine. It functions in the pathway lipid metabolism; hydroperoxy eicosatetraenoic acid biosynthesis. In terms of biological role, non-heme iron-containing dioxygenase that catalyzes the stereo-specific peroxidation of free and esterified polyunsaturated fatty acids generating a spectrum of bioactive lipid mediators. It inserts peroxyl groups at C12 or C15 of arachidonate ((5Z,8Z,11Z,14Z)-eicosatetraenoate) producing both 12-hydroperoxyeicosatetraenoate/12-HPETE and 15-hydroperoxyeicosatetraenoate/15-HPETE. It may then act on 12-HPETE to produce hepoxilins, which may show pro-inflammatory properties. Can also peroxidize linoleate ((9Z,12Z)-octadecadienoate) to 13-hydroperoxyoctadecadienoate. May participate in the sequential oxidations of DHA ((4Z,7Z,10Z,13Z,16Z,19Z)-docosahexaenoate) to generate specialized pro-resolving mediators (SPMs)like resolvin D5 ((7S,17S)-diHPDHA) and (7S,14S)-diHPDHA, that actively down-regulate the immune response and have anti-aggregation properties with platelets. Can convert epoxy fatty acids to hydroperoxy-epoxides derivatives followed by an intramolecular nucleophilic substitution leading to the formation of monocyclic endoperoxides. Plays an important role during the maintenance of self-tolerance by peroxidizing membrane-bound phosphatidylethanolamine which can then signal the sorting process for clearance of apoptotic cells during inflammation and prevent an autoimmune response. In addition to its role in the immune and inflammatory responses, this enzyme may play a role in epithelial wound healing in the cornea through production of lipoxin A4 (LXA(4)) and docosahexaenoic acid-derived neuroprotectin D1 (NPD1; 10R,17S-HDHA), both lipid autacoids exhibit anti-inflammatory and neuroprotective properties. Furthermore, it may regulate actin polymerization which is crucial for several biological processes such as the phagocytosis of apoptotic cells. It is also implicated in the generation of endogenous ligands for peroxisome proliferator activated receptor (PPAR-gamma), hence modulating macrophage development and function. It may also exert a negative effect on skeletal development by regulating bone mass through this pathway. As well as participates in ER stress and downstream inflammation in adipocytes, pancreatic islets, and liver. Finally, it is also involved in the cellular response to IL13/interleukin-13. This chain is Polyunsaturated fatty acid lipoxygenase ALOX15, found in Rattus norvegicus (Rat).